The primary structure comprises 369 residues: Anhydro-N-acetylmuramic acid kinase (369 aa).

Position 12 to 19 (12 to 19) interacts with ATP; the sequence is GTSLDGVD.

This sequence belongs to the anhydro-N-acetylmuramic acid kinase family.

It carries out the reaction 1,6-anhydro-N-acetyl-beta-muramate + ATP + H2O = N-acetyl-D-muramate 6-phosphate + ADP + H(+). The protein operates within amino-sugar metabolism; 1,6-anhydro-N-acetylmuramate degradation. It participates in cell wall biogenesis; peptidoglycan recycling. Its function is as follows. Catalyzes the specific phosphorylation of 1,6-anhydro-N-acetylmuramic acid (anhMurNAc) with the simultaneous cleavage of the 1,6-anhydro ring, generating MurNAc-6-P. Is required for the utilization of anhMurNAc either imported from the medium or derived from its own cell wall murein, and thus plays a role in cell wall recycling. This is Anhydro-N-acetylmuramic acid kinase from Actinobacillus pleuropneumoniae serotype 5b (strain L20).